The following is a 480-amino-acid chain: tRNA-2-methylthio-N(6)-dimethylallyladenosine synthase (480 aa).

In terms of domain architecture, MTTase N-terminal spans 43-161 (KLYCLNTFGC…FPELLYSAMD (119 aa)). [4Fe-4S] cluster contacts are provided by cysteine 52, cysteine 88, cysteine 122, cysteine 198, cysteine 202, and cysteine 205. A Radical SAM core domain is found at 184–414 (RKDGVKAWVT…LETQNRISKE (231 aa)). One can recognise a TRAM domain in the interval 417-480 (DTFLGKVVEV…TWSLEGSIVR (64 aa)).

The protein belongs to the methylthiotransferase family. MiaB subfamily. Monomer. [4Fe-4S] cluster is required as a cofactor.

It localises to the cytoplasm. The catalysed reaction is N(6)-dimethylallyladenosine(37) in tRNA + (sulfur carrier)-SH + AH2 + 2 S-adenosyl-L-methionine = 2-methylsulfanyl-N(6)-dimethylallyladenosine(37) in tRNA + (sulfur carrier)-H + 5'-deoxyadenosine + L-methionine + A + S-adenosyl-L-homocysteine + 2 H(+). Functionally, catalyzes the methylthiolation of N6-(dimethylallyl)adenosine (i(6)A), leading to the formation of 2-methylthio-N6-(dimethylallyl)adenosine (ms(2)i(6)A) at position 37 in tRNAs that read codons beginning with uridine. The protein is tRNA-2-methylthio-N(6)-dimethylallyladenosine synthase of Acetivibrio thermocellus (strain ATCC 27405 / DSM 1237 / JCM 9322 / NBRC 103400 / NCIMB 10682 / NRRL B-4536 / VPI 7372) (Clostridium thermocellum).